The chain runs to 1064 residues: Phosphatidylinositol 4,5-bisphosphate 3-kinase catalytic subunit beta isoform (1064 aa).

The 90-residue stretch at 20 to 109 (SDGAISVDFL…LPVLKLVTRS (90 aa)) folds into the PI3K-ABD domain. In terms of domain architecture, PI3K-RBD spans 188-279 (GGKLVVAVHF…RTLPHFILVE (92 aa)). Position 318 is a phosphoserine (serine 318). In terms of domain architecture, C2 PI3K-type spans 323–490 (NNNPFQITLV…NATALHITFP (168 aa)). Positions 404–412 (KVKTKKSTK) match the Nuclear localization signal (NLS) motif. The PIK helical domain maps to 518–695 (ANVSSRGGKK…GVILEAYCRG (178 aa)). Positions 766–1047 (YVEKCKYMDS…KFDEALRESW (282 aa)) constitute a PI3K/PI4K catalytic domain. Residues 772 to 778 (YMDSKMK) are G-loop. Positions 910–918 (GIGDRHSDN) are catalytic loop. An activation loop region spans residues 929-955 (HIDFGHILGNFKSKFGIKRERVPFILT). At serine 1064 the chain carries Phosphoserine; by autocatalysis.

Belongs to the PI3/PI4-kinase family. Heterodimer of a catalytic subunit PIK3CB and a p85 regulatory subunit (PIK3R1, PIK3R2 or PIK3R3). Interaction with PIK3R2 is required for nuclear localization and nuclear export. Part of a complex with PIK3R1 and PTEN. Binding to PTEN may antagonize the lipid kinase activity under normal growth conditions. Part of a complex involved in autophagosome formation composed of PIK3C3 and PIK3R4. Interacts with BECN1, ATG14 and RAB5A. Phosphorylation at Ser-1064 down-regulates lipid kinase activity. In terms of processing, autophosphorylation at Ser-1064 negatively regulates the phosphatidylinositol-4,5-bisphosphate 3-kinase activity.

The protein localises to the cytoplasm. It is found in the nucleus. It catalyses the reaction a 1,2-diacyl-sn-glycero-3-phospho-(1D-myo-inositol-4,5-bisphosphate) + ATP = a 1,2-diacyl-sn-glycero-3-phospho-(1D-myo-inositol-3,4,5-trisphosphate) + ADP + H(+). The enzyme catalyses 1-octadecanoyl-2-(5Z,8Z,11Z,14Z)-eicosatetraenoyl-sn-glycero-3-phospho-1D-myo-inositol 4,5-bisphosphate + ATP = 1-octadecanoyl-2-(5Z,8Z,11Z,14Z-eicosatetraenoyl)-sn-glycero-3-phospho-(1D-myo-inositol 3,4,5-triphosphate) + ADP + H(+). The catalysed reaction is L-seryl-[protein] + ATP = O-phospho-L-seryl-[protein] + ADP + H(+). The protein operates within phospholipid metabolism; phosphatidylinositol phosphate biosynthesis. Functionally, phosphoinositide-3-kinase (PI3K) phosphorylates phosphatidylinositol (PI) derivatives at position 3 of the inositol ring to produce 3-phosphoinositides. Uses ATP and PtdIns(4,5)P2 (phosphatidylinositol 4,5-bisphosphate) to generate phosphatidylinositol 3,4,5-trisphosphate (PIP3). PIP3 plays a key role by recruiting PH domain-containing proteins to the membrane, including AKT1 and PDPK1, activating signaling cascades involved in cell growth, survival, proliferation, motility and morphology. Involved in the activation of AKT1 upon stimulation by G-protein coupled receptors (GPCRs) ligands such as CXCL12, sphingosine 1-phosphate, and lysophosphatidic acid. May also act downstream receptor tyrosine kinases. Required in different signaling pathways for stable platelet adhesion and aggregation. Plays a role in platelet activation signaling triggered by GPCRs, alpha-IIb/beta-3 integrins (ITGA2B/ ITGB3) and ITAM (immunoreceptor tyrosine-based activation motif)-bearing receptors such as GP6. Regulates the strength of adhesion of ITGA2B/ ITGB3 activated receptors necessary for the cellular transmission of contractile forces. Required for platelet aggregation induced by F2 (thrombin) and thromboxane A2 (TXA2). Has a role in cell survival. May have a role in cell migration. Involved in the early stage of autophagosome formation. Modulates the intracellular level of PtdIns3P (phosphatidylinositol 3-phosphate) and activates PIK3C3 kinase activity. May act as a scaffold, independently of its lipid kinase activity to positively regulate autophagy. May have a role in insulin signaling as scaffolding protein in which the lipid kinase activity is not required. May have a kinase-independent function in regulating cell proliferation and in clathrin-mediated endocytosis. Mediator of oncogenic signal in cell lines lacking PTEN. The lipid kinase activity is necessary for its role in oncogenic transformation. Required for the growth of ERBB2 and RAS driven tumors. Also has a protein kinase activity showing autophosphorylation. This chain is Phosphatidylinositol 4,5-bisphosphate 3-kinase catalytic subunit beta isoform (Pik3cb), found in Mus musculus (Mouse).